A 451-amino-acid chain; its full sequence is Tol-Pal system protein TolB 1 (451 aa).

The signal sequence occupies residues 1–19; that stretch reads MTLRMLFAFALLAAAPAQA. The segment covering 18-29 has biased composition (low complexity); it reads QAQQTEPQPAEE. Disordered stretches follow at residues 18-37 and 431-451; these read QAQQ…GTVS and NERR…PLLP.

This sequence belongs to the TolB family. As to quaternary structure, the Tol-Pal system is composed of five core proteins: the inner membrane proteins TolA, TolQ and TolR, the periplasmic protein TolB and the outer membrane protein Pal. They form a network linking the inner and outer membranes and the peptidoglycan layer.

It is found in the periplasm. Part of the Tol-Pal system, which plays a role in outer membrane invagination during cell division and is important for maintaining outer membrane integrity. The polypeptide is Tol-Pal system protein TolB 1 (Novosphingobium aromaticivorans (strain ATCC 700278 / DSM 12444 / CCUG 56034 / CIP 105152 / NBRC 16084 / F199)).